The following is a 349-amino-acid chain: UDP-glucose 4-epimerase (349 aa).

Residues 10–12 (GFI), 31–35 (DNFAN), 66–67 (DV), and K92 each bind NAD(+). 132 to 134 (SAT) serves as a coordination point for substrate. The Proton acceptor role is filled by Y158. Positions 162 and 186 each coordinate NAD(+). Substrate contacts are provided by residues 186 to 188 (YFN), 207 to 209 (NNL), 225 to 227 (TIY), R240, and 303 to 306 (RPGD).

The protein belongs to the NAD(P)-dependent epimerase/dehydratase family. It depends on NAD(+) as a cofactor. As to expression, expressed in gonads, vulva, intestine, hypdermis and nervous system.

The catalysed reaction is UDP-alpha-D-glucose = UDP-alpha-D-galactose. It carries out the reaction UDP-N-acetyl-alpha-D-glucosamine = UDP-N-acetyl-alpha-D-galactosamine. Its pathway is carbohydrate metabolism; galactose metabolism. Functionally, catalyzes two distinct but analogous reactions: the reversible epimerization of UDP-glucose to UDP-galactose and the reversible epimerization of UDP-N-acetylglucosamine to UDP-N-acetylgalactosamine. The reaction with UDP-Gal plays a critical role in the Leloir pathway of galactose catabolism in which galactose is converted to the glycolytic intermediate glucose 6-phosphate. It contributes to the catabolism of dietary galactose and enables the endogenous biosynthesis of both UDP-Gal and UDP-GalNAc when exogenous sources are limited. Both UDP-sugar interconversions are important for the synthesis of glycoproteins and glycolipids. In Caenorhabditis elegans, this protein is UDP-glucose 4-epimerase.